The following is an 810-amino-acid chain: F-BAR domain only protein 2 (810 aa).

The F-BAR domain occupies 3–250 (MAYFVENFWG…NMANTTVESL (248 aa)). The mediates dimerization and binding to membranes enriched in Pi(4,5)-P2 and induces their tubulation stretch occupies residues 3–274 (MAYFVENFWG…PGLIEFEECD (272 aa)). Residues 87-156 (HLDLVRKLQE…CVEQERLKKE (70 aa)) adopt a coiled-coil conformation. Residue Lys-297 forms a Glycyl lysine isopeptide (Lys-Gly) (interchain with G-Cter in SUMO2) linkage. The interval 301–352 (DAESVECPDADSLNIPDVDEEGYSIKPETNQNDTKENHFYSSSDSDSEDEEP) is disordered. Phosphoserine is present on Ser-312. At Thr-385 the chain carries Phosphothreonine. A phosphoserine mark is found at Ser-387, Ser-394, and Ser-403. Positions 404-537 (NEELTKSKPS…VSRGPSPVSL (134 aa)) are disordered. Over residues 433–456 (PSLDSSSSSSLTSSSSARPTTPLS) the composition is skewed to low complexity. Ser-488, Ser-493, Ser-496, Ser-508, Ser-510, Ser-511, and Ser-533 each carry phosphoserine. Positions 502-521 (PLARAESSSSISSSASLSAA) are enriched in low complexity. Positions 521-810 (ANTPTVGVSR…FATGRYLADC (290 aa)) are mediates interaction with DAB2, EPS15, EPS15R and ITSN1. The region spanning 542 to 809 (TLPVAVALTE…RFATGRYLAD (268 aa)) is the MHD domain.

It belongs to the FCHO family. In terms of assembly, homodimer; disulfide-linked. May form homotetramer. Interacts with AP2A1. Interacts with EPS15, EPS15R, ITSN1 and ITSN2; recruit those scaffolding proteins which in turn may interact with the adaptor protein complex AP-2 at the plasma membrane. Interacts with DAB2 (via DPF motifs); mediates LDL receptor/LDLR endocytosis. In terms of processing, ubiquitinated. Mainly undergoes monoubiquitination but also polyubiquitination.

Its subcellular location is the membrane. It localises to the clathrin-coated pit. Its function is as follows. Functions in an early step of clathrin-mediated endocytosis. Has both a membrane binding/bending activity and the ability to recruit proteins essential to the formation of functional clathrin-coated pits. Has a lipid-binding activity with a preference for membranes enriched in phosphatidylserine and phosphoinositides (Pi(4,5) biphosphate) like the plasma membrane. Its membrane-bending activity might be important for the subsequent action of clathrin and adaptors in the formation of clathrin-coated vesicles. Involved in adaptor protein complex AP-2-dependent endocytosis of the transferrin receptor, it also functions in the AP-2-independent endocytosis of the LDL receptor. The protein is F-BAR domain only protein 2 (FCHO2) of Homo sapiens (Human).